The primary structure comprises 137 residues: Large ribosomal subunit protein uL14A (137 aa).

Serine 2 carries the N-acetylserine modification. An N6,N6-dimethyllysine; by RKM1 mark is found at lysine 106 and lysine 110.

Belongs to the universal ribosomal protein uL14 family. In terms of assembly, component of the large ribosomal subunit (LSU). Mature yeast ribosomes consist of a small (40S) and a large (60S) subunit. The 40S small subunit contains 1 molecule of ribosomal RNA (18S rRNA) and 33 different proteins (encoded by 57 genes). The large 60S subunit contains 3 rRNA molecules (25S, 5.8S and 5S rRNA) and 46 different proteins (encoded by 81 genes). In terms of processing, methylated by RKM1 at 2 different sites, but it is unclear which are the 2 methylated residues among Lys-40, Lys-106 and/or Lys-110.

The protein resides in the cytoplasm. Component of the ribosome, a large ribonucleoprotein complex responsible for the synthesis of proteins in the cell. The small ribosomal subunit (SSU) binds messenger RNAs (mRNAs) and translates the encoded message by selecting cognate aminoacyl-transfer RNA (tRNA) molecules. The large subunit (LSU) contains the ribosomal catalytic site termed the peptidyl transferase center (PTC), which catalyzes the formation of peptide bonds, thereby polymerizing the amino acids delivered by tRNAs into a polypeptide chain. The nascent polypeptides leave the ribosome through a tunnel in the LSU and interact with protein factors that function in enzymatic processing, targeting, and the membrane insertion of nascent chains at the exit of the ribosomal tunnel. The protein is Large ribosomal subunit protein uL14A of Saccharomyces cerevisiae (strain ATCC 204508 / S288c) (Baker's yeast).